Here is a 324-residue protein sequence, read N- to C-terminus: Beta-ketoacyl-[acyl-carrier-protein] synthase III (324 aa).

Catalysis depends on residues C114 and H246. The interval 247–251 (QANLR) is ACP-binding. The active site involves N276.

This sequence belongs to the thiolase-like superfamily. FabH family. In terms of assembly, homodimer.

It is found in the cytoplasm. The catalysed reaction is malonyl-[ACP] + acetyl-CoA + H(+) = 3-oxobutanoyl-[ACP] + CO2 + CoA. The protein operates within lipid metabolism; fatty acid biosynthesis. In terms of biological role, catalyzes the condensation reaction of fatty acid synthesis by the addition to an acyl acceptor of two carbons from malonyl-ACP. Catalyzes the first condensation reaction which initiates fatty acid synthesis and may therefore play a role in governing the total rate of fatty acid production. Possesses both acetoacetyl-ACP synthase and acetyl transacylase activities. Its substrate specificity determines the biosynthesis of branched-chain and/or straight-chain of fatty acids. The sequence is that of Beta-ketoacyl-[acyl-carrier-protein] synthase III from Campylobacter jejuni subsp. jejuni serotype O:2 (strain ATCC 700819 / NCTC 11168).